Reading from the N-terminus, the 403-residue chain is Tyrosine--tRNA ligase (403 aa).

The 'HIGH' region signature appears at 43–52; it reads PTAPDLHLGH. Positions 227 to 231 match the 'KMSKS' region motif; it reads KMSKS. Lysine 230 lines the ATP pocket. One can recognise an S4 RNA-binding domain in the interval 338-399; that stretch reads LPIAQLLKQT…GKRKFARVTI (62 aa).

The protein belongs to the class-I aminoacyl-tRNA synthetase family. TyrS type 2 subfamily. In terms of assembly, homodimer.

It is found in the cytoplasm. It carries out the reaction tRNA(Tyr) + L-tyrosine + ATP = L-tyrosyl-tRNA(Tyr) + AMP + diphosphate + H(+). Its function is as follows. Catalyzes the attachment of tyrosine to tRNA(Tyr) in a two-step reaction: tyrosine is first activated by ATP to form Tyr-AMP and then transferred to the acceptor end of tRNA(Tyr). This chain is Tyrosine--tRNA ligase, found in Nitrosospira multiformis (strain ATCC 25196 / NCIMB 11849 / C 71).